Here is a 77-residue protein sequence, read N- to C-terminus: MNAKILALLIGVVFVGLFTVSTPAHPLCLLDPPFGFCQSSISRFAPVVGKCREYIYGGCSGKANNFQAQAKCQANCG.

An N-terminal signal peptide occupies residues 1-24 (MNAKILALLIGVVFVGLFTVSTPA). The BPTI/Kunitz inhibitor domain occupies 28–76 (CLLDPPFGFCQSSISRFAPVVGKCREYIYGGCSGKANNFQAQAKCQANC). 3 disulfides stabilise this stretch: Cys28-Cys76, Cys37-Cys59, and Cys51-Cys72.

The protein belongs to the venom Kunitz-type family. In terms of tissue distribution, expressed by the venom gland.

It localises to the secreted. In terms of biological role, serine protease inhibitor that inhibits trypsin (Ki=550 nM) and thrombin (Ki=26000 nM). Exerts anticoagulant activity probably by the way of inhibiting thrombin. The protein is Kunitz-type serine protease inhibitor bicolin of Vespa bicolor (Black shield wasp).